The chain runs to 937 residues: Proprotein convertase subtilisin/kexin type 6 (937 aa).

The span at 1 to 16 (MPPRAPPAPGPRPPPR) shows a compositional bias: pro residues. Residues 1 to 22 (MPPRAPPAPGPRPPPRAAGRHG) are disordered. The N-terminal stretch at 1 to 45 (MPPRAPPAPGPRPPPRAAGRHGLSPLAPRPWRWLLLLALPAVCSA) is a signal peptide. Residues 46-132 (LPPPRPVYTN…QQEVKRRVKR (87 aa)) constitute a propeptide that is removed on maturation. A Peptidase S8 domain is found at 149 to 468 (MWYMHCADKN…FGLVDAEALV (320 aa)). Active-site charge relay system residues include aspartate 186 and histidine 227. Residue asparagine 240 is glycosylated (N-linked (GlcNAc...) asparagine). The active-site Charge relay system is the serine 401. Positions 476–616 (AVPSQHMCVA…SLILYGTAEH (141 aa)) constitute a P/Homo B domain. A Cell attachment site motif is present at residues 534–536 (RGD). A disordered region spans residues 621–656 (FSSHQSRSRMLELSVPEQEPLKAEGPPPQAETPEEE). FU repeat units follow at residues 660-707 (TGVC…GYFG), 711-758 (ARRC…GLYA), 762-806 (QRLC…GTYF), 810-855 (LIRC…GFYP), and 863-911 (HKVC…ETFC). The interval 680–898 (CLNCVHFSLG…GFTQLGTSCI (219 aa)) is CRM (Cys-rich motif). 2 N-linked (GlcNAc...) asparagine glycosylation sites follow: asparagine 882 and asparagine 900. A PLAC domain is found at 899 to 937 (TNHTCSNADETFCEMVKSNRLCERKLFIQFCCRTCLLAG).

It belongs to the peptidase S8 family. The precursor protein seems to exist in the reticulum endoplasmic as both a monomer and a dimer-sized complex whereas mature form exists only as a monomer, suggesting that propeptide cleavage affects its tertiary or quaternary structure. Interacts (immature form including the propeptide) with RCN3; probably involved in the maturation and the secretion of PCSK6. Ca(2+) serves as cofactor. In terms of tissue distribution, high expression in the anterior pituitary and in several brain regions, the atrium, and the ventricle.

Its function is as follows. Serine endoprotease that processes various proproteins by cleavage at paired basic amino acids, recognizing the RXXX[KR]R consensus motif. Likely functions in the constitutive secretory pathway, with unique restricted distribution in both neuroendocrine and non-neuroendocrine tissues. In Rattus norvegicus (Rat), this protein is Proprotein convertase subtilisin/kexin type 6 (Pcsk6).